Reading from the N-terminus, the 387-residue chain is Eukaryotic translation initiation factor 3 subunit M (387 aa).

A PCI domain is found at 181 to 340; sequence LSSKVMIELL…QKVHISSTMH (160 aa).

Belongs to the eIF-3 subunit M family. Component of the eukaryotic translation initiation factor 3 (eIF-3) complex. The eIF-3 complex interacts with pix.

The protein localises to the cytoplasm. It is found in the golgi apparatus. Its function is as follows. Component of the eukaryotic translation initiation factor 3 (eIF-3) complex, which is involved in protein synthesis of a specialized repertoire of mRNAs and, together with other initiation factors, stimulates binding of mRNA and methionyl-tRNAi to the 40S ribosome. The eIF-3 complex specifically targets and initiates translation of a subset of mRNAs involved in cell proliferation. The sequence is that of Eukaryotic translation initiation factor 3 subunit M from Drosophila sechellia (Fruit fly).